The sequence spans 248 residues: Ribosomal RNA small subunit methyltransferase G (248 aa).

S-adenosyl-L-methionine contacts are provided by residues Gly-93, Leu-98, 143–144 (AE), and Arg-161.

The protein belongs to the methyltransferase superfamily. RNA methyltransferase RsmG family.

It localises to the cytoplasm. Specifically methylates the N7 position of guanine in position 518 of 16S rRNA. In Mycobacterium leprae (strain Br4923), this protein is Ribosomal RNA small subunit methyltransferase G.